We begin with the raw amino-acid sequence, 249 residues long: DNA repair protein RecO (249 aa).

It belongs to the RecO family.

Functionally, involved in DNA repair and RecF pathway recombination. The sequence is that of DNA repair protein RecO from Polaromonas naphthalenivorans (strain CJ2).